A 158-amino-acid chain; its full sequence is Anaerobic nitrite reductase AHB2 (158 aa).

The 150-residue stretch at 5 to 154 (GFTEKQEALV…LALAIKTEMK (150 aa)) folds into the Globin domain. The Homodimerization signature appears at 38-42 (EIAPA). Positions 48, 62, 66, and 101 each coordinate heme b. Positions 108–120 (DPHFEVVKEALLR) match the Homodimerization motif.

It belongs to the plant globin family. In terms of assembly, unable to dimerize. It depends on heme b as a cofactor. In terms of tissue distribution, expressed in rosette leaves but not in roots.

It is found in the cytoplasm. The protein resides in the nucleus. The enzyme catalyses Fe(III)-heme b-[protein] + nitric oxide + H2O = Fe(II)-heme b-[protein] + nitrite + 2 H(+). Its function is as follows. Phytoglobin that reduces nitrite to nitric oxide (NO) under anoxic conditions (e.g. during flooding or in waterlogged soil). May not function as an oxygen storage or transport protein. Has an unusually high affinity for O(2) through an hexacoordinate heme iron because of a very low dissociation constant. In Arabidopsis thaliana (Mouse-ear cress), this protein is Anaerobic nitrite reductase AHB2.